Consider the following 554-residue polypeptide: Arginine--tRNA ligase (554 aa).

The 'HIGH' region motif lies at 132 to 142 (ANPTGPIHLGG).

It belongs to the class-I aminoacyl-tRNA synthetase family. In terms of assembly, monomer.

Its subcellular location is the cytoplasm. The catalysed reaction is tRNA(Arg) + L-arginine + ATP = L-arginyl-tRNA(Arg) + AMP + diphosphate. This chain is Arginine--tRNA ligase, found in Kineococcus radiotolerans (strain ATCC BAA-149 / DSM 14245 / SRS30216).